The sequence spans 398 residues: Transcription factor kk1f (398 aa).

Positions 1-28 (MTFVETVAVPDNEERPSAGHNRPVADST) are disordered. The bZIP domain occupies 31 to 62 (PNAREMKVQNRVAQRTHHRRLKTKLEVLRERL). A basic motif region spans residues 34 to 50 (REMKVQNRVAQRTHHRR). Positions 51-58 (LKTKLEVL) are leucine-zipper.

The protein belongs to the bZIP family.

The protein resides in the nucleus. The protein operates within secondary metabolite biosynthesis. Transcription factor; part of the gene cluster that mediates the biosynthesis of KK-1, a novel cyclic depsipeptide with 10 residues which is a promising active compound with high activity against many plant pathogens, especially Botrytis cinerea. Positively regulates the expression of all the genes from the KK-1 biosynthesis gene cluster. This chain is Transcription factor kk1f, found in Curvularia clavata.